A 520-amino-acid chain; its full sequence is BBSome complex member BBS4 (520 aa).

The segment at 1-26 (MAEVKLGMKTQVPASVESQKPRSKKA) is disordered. The tract at residues 1–66 (MAEVKLGMKT…EQLQETQGLC (66 aa)) is required for localization to centrosomes. TPR repeat units lie at residues 67 to 100 (EYAI…SPQC), 102 to 134 (DNLK…NQKD), 135 to 167 (WEIC…LNKH), 168 to 201 (DLTY…SPEN), 203 to 235 (ELLT…DPAN), 237 to 269 (KAIL…IPES), 270 to 303 (PPLW…APFD), 304 to 337 (WKIL…QPKM), 339 to 371 (ELYM…DKCN), and 373 to 408 (LVNL…LKDN). Residues 101-337 (ADNLKQVARS…SAAINFQPKM (237 aa)) are interaction with PCM1. The tract at residues 338-520 (GELYMLLAVA…TEASEQKKEK (183 aa)) is required for localization to centrosomes. The disordered stretch occupies residues 488–520 (AQLPKPPSLPLEPEPEPTVEASPTEASEQKKEK).

Belongs to the BBS4 family. As to quaternary structure, part of BBSome complex, that contains BBS1, BBS2, BBS4, BBS5, BBS7, BBS8/TTC8, BBS9 and BBIP10. Interacts with PCM1 and DCTN1. Interacts with DC28B. Interacts with ALDOB and C2CD3. Interacts with PKD1. Interacts with CEP290. Interacts with DLEC1. Expressed in the hippocampus and dentate gyrus, the columnar epithelial cells of bronchioles, the olfactory epithelium and the inner segment and outer nuclear layer of the retina. Expressed in testis.

The protein localises to the cytoplasm. It is found in the cytoskeleton. Its subcellular location is the microtubule organizing center. The protein resides in the centrosome. It localises to the cell projection. The protein localises to the cilium membrane. It is found in the centriolar satellite. Its subcellular location is the cilium. The protein resides in the flagellum. Its function is as follows. The BBSome complex is thought to function as a coat complex required for sorting of specific membrane proteins to the primary cilia. The BBSome complex is required for ciliogenesis but is dispensable for centriolar satellite function. This ciliogenic function is mediated in part by the Rab8 GDP/GTP exchange factor, which localizes to the basal body and contacts the BBSome. Rab8(GTP) enters the primary cilium and promotes extension of the ciliary membrane. Firstly the BBSome associates with the ciliary membrane and binds to RAB3IP/Rabin8, the guanosyl exchange factor (GEF) for Rab8 and then the Rab8-GTP localizes to the cilium and promotes docking and fusion of carrier vesicles to the base of the ciliary membrane. The BBSome complex, together with the LTZL1, controls SMO ciliary trafficking and contributes to the sonic hedgehog (SHH) pathway regulation. Required for proper BBSome complex assembly and its ciliary localization. Required for microtubule anchoring at the centrosome but not for microtubule nucleation. May be required for the dynein-mediated transport of pericentriolar proteins to the centrosome. The protein is BBSome complex member BBS4 (Bbs4) of Mus musculus (Mouse).